The sequence spans 244 residues: MELFLAGRRVLVTGAGKGIGRGTVQALHATGARVVAVSRTQADLDSLVRECPGIEPVCVDLGDWEATERALGSVGPVDLLVNNAAVALLQPFLEVTKEAFDRSFEVNLRAVIQVSQIVARGLIARGVPGAIVNVSSQCSQRAVTNHSVYCSTKGALDMLTKVMALELGPHKIRVNAVNPTVVMTSMGQATWSDPHKAKTMLNRIPLGKFAEVEHVVNAILFLLSDRSGMTTGSTLPVEGGFWAC.

Met-1 is subject to N-acetylmethionine. Position 11–40 (11–40) interacts with NADP(+); the sequence is LVTGAGKGIGRGTVQALHATGARVVAVSRT. Residue Arg-21 is modified to Omega-N-methylarginine. Ser-46 carries the post-translational modification Phosphoserine. Ser-136 contributes to the substrate binding site. Residue Tyr-149 is the Proton acceptor of the active site. Lys-153 serves as a coordination point for NADP(+).

The protein belongs to the short-chain dehydrogenases/reductases (SDR) family. As to quaternary structure, homotetramer. As to expression, highly expressed in kidney, liver and epididymis. In the epididymis, it is mainly expressed in the proximal and distal sections of the corpus region. Weakly or not expressed in brain, lung, heart, spleen and testis.

The protein resides in the membrane. It catalyses the reaction xylitol + NADP(+) = L-xylulose + NADPH + H(+). Its function is as follows. Catalyzes the NADPH-dependent reduction of several pentoses, tetroses, trioses, alpha-dicarbonyl compounds and L-xylulose. Participates in the uronate cycle of glucose metabolism. May play a role in the water absorption and cellular osmoregulation in the proximal renal tubules by producing xylitol, an osmolyte, thereby preventing osmolytic stress from occurring in the renal tubules. The protein is L-xylulose reductase (DCXR) of Homo sapiens (Human).